The sequence spans 172 residues: FMN reductase (NADH) RutF 2 (172 aa).

This sequence belongs to the non-flavoprotein flavin reductase family. RutF subfamily.

It catalyses the reaction FMNH2 + NAD(+) = FMN + NADH + 2 H(+). Catalyzes the reduction of FMN to FMNH2 which is used to reduce pyrimidine by RutA via the Rut pathway. The protein is FMN reductase (NADH) RutF 2 of Methylorubrum extorquens (strain PA1) (Methylobacterium extorquens).